We begin with the raw amino-acid sequence, 498 residues long: Probable malate:quinone oxidoreductase (498 aa).

It belongs to the MQO family. The cofactor is FAD.

It catalyses the reaction (S)-malate + a quinone = a quinol + oxaloacetate. It participates in carbohydrate metabolism; tricarboxylic acid cycle; oxaloacetate from (S)-malate (quinone route): step 1/1. The chain is Probable malate:quinone oxidoreductase from Prochlorococcus marinus (strain MIT 9312).